The sequence spans 275 residues: Voltage-dependent calcium channel gamma-7 subunit (275 aa).

4 consecutive transmembrane segments (helical) span residues 8–28 (ALTLLSSVFGACGLLLVGIAV), 103–123 (FPMVSLFLVFTAFVISNIGHI), 129–149 (ILAFVSGIFFILSGLSLVVGL), and 179–199 (FAFAASSFLLKEGAGVMSVYL). Phosphoserine occurs at positions 222, 225, and 273.

The protein belongs to the PMP-22/EMP/MP20 family. CACNG subfamily. In terms of assembly, interacts with CACNA1C. Identified in a complex with the L-type calcium channel subunits CACNA1C, CACNA2D1 and either CACNB1 or CACNB2. Acts as an auxiliary subunit for AMPA-selective glutamate receptors (AMPARs), such as GRIA1 and GRIA2. Detected in heart left ventricle. Widely expressed.

It localises to the cell membrane. Regulates the activity of L-type calcium channels that contain CACNA1C as pore-forming subunit. Regulates the trafficking and gating properties of AMPA-selective glutamate receptors (AMPARs). Promotes their targeting to the cell membrane and synapses and modulates their gating properties by slowing their rates of activation, deactivation and desensitization and by mediating their resensitization. Displays subunit-specific AMPA receptor regulation. Shows specificity only for GRIA1 and GRIA2. The polypeptide is Voltage-dependent calcium channel gamma-7 subunit (CACNG7) (Homo sapiens (Human)).